Here is a 296-residue protein sequence, read N- to C-terminus: MNIHFKGTGVAVTTPFNGQTIDYNLFEDHLNFLINNNVEALIINGTTGEGSTLTEDEKLKTIEIAVRVAHGRVPVIAGTGTNNTQATIEHSLKAKALGVDSIMLITPYYNKTNQRGLLAHFTTIADAVELPVLLYNVPARTNMTIEQETVAALAEHPYIYGIKDATGDINYMKTLKSVVPDDFALYSGNDDAVLPFYEAGGDGVISVIANAIPAEFSDIYRTYQVNRHEAERQFNNLLPLINALSVDVNPIPIKALVAYIGYANGELRLPLVPMLEQDTKQLIELYNRIAKGSDLS.

Threonine 47 is a binding site for pyruvate. Residue tyrosine 135 is the Proton donor/acceptor of the active site. The active-site Schiff-base intermediate with substrate is the lysine 163. Isoleucine 205 provides a ligand contact to pyruvate.

It belongs to the DapA family. In terms of assembly, homotetramer; dimer of dimers.

It is found in the cytoplasm. The catalysed reaction is L-aspartate 4-semialdehyde + pyruvate = (2S,4S)-4-hydroxy-2,3,4,5-tetrahydrodipicolinate + H2O + H(+). It functions in the pathway amino-acid biosynthesis; L-lysine biosynthesis via DAP pathway; (S)-tetrahydrodipicolinate from L-aspartate: step 3/4. In terms of biological role, catalyzes the condensation of (S)-aspartate-beta-semialdehyde [(S)-ASA] and pyruvate to 4-hydroxy-tetrahydrodipicolinate (HTPA). The protein is 4-hydroxy-tetrahydrodipicolinate synthase of Macrococcus caseolyticus (strain JCSC5402) (Macrococcoides caseolyticum).